The following is a 349-amino-acid chain: tRNA pseudouridine synthase D (349 aa).

Phe-27 lines the substrate pocket. Catalysis depends on Asp-80, which acts as the Nucleophile. Residue Asn-129 participates in substrate binding. The TRUD domain occupies 155-303; that stretch reads GVPNYFGAQR…VEAARRAMLL (149 aa). Phe-329 is a binding site for substrate.

The protein belongs to the pseudouridine synthase TruD family.

The enzyme catalyses uridine(13) in tRNA = pseudouridine(13) in tRNA. In terms of biological role, responsible for synthesis of pseudouridine from uracil-13 in transfer RNAs. This chain is tRNA pseudouridine synthase D, found in Citrobacter koseri (strain ATCC BAA-895 / CDC 4225-83 / SGSC4696).